Consider the following 225-residue polypeptide: MAEQECPVTNLLLLGRSENGKSSTGNTIIGEKYFEVNLFGRDMDQRCKMFRALIEDGPIINVIDTPGLLESSVSGDYLSKEIMNCLTMAEEGIHAVLFVLSITNRISQREEFTFNTLQQIFDDKILDYFIVVFTGGDELEADNQTLDDYLREGCPEFLTRVLKLCGGRKVLFNNKTKDKGKRNKQLNQLLAHVTDIRQQNGGIPYTENMHRKIKFKNLKYSNVKL.

The region spanning 6-214 is the AIG1-type G domain; it reads CPVTNLLLLG…YTENMHRKIK (209 aa). Residues 15 to 22 are G1; that stretch reads GRSENGKS. 15–23 is a binding site for GTP; the sequence is GRSENGKSS. Residues 42-46 are G2; sequence DMDQR. The G3 stretch occupies residues 64–67; that stretch reads DTPG. A G4 region spans residues 134 to 137; the sequence is TGGD. The segment at 173–175 is G5; sequence NNK. Residue Asn174 coordinates GTP.

Belongs to the TRAFAC class TrmE-Era-EngA-EngB-Septin-like GTPase superfamily. AIG1/Toc34/Toc159-like paraseptin GTPase family. IAN subfamily. Mostly expressed in pollen.

The polypeptide is Immune-associated nucleotide-binding protein 1 (Arabidopsis thaliana (Mouse-ear cress)).